The following is a 790-amino-acid chain: Penicillin-binding protein 1A (790 aa).

Residues 1–6 lie on the Cytoplasmic side of the membrane; sequence MYKSLF. A helical; Signal-anchor for type II membrane protein membrane pass occupies residues 7 to 27; it reads FCLKIFAVLILVGCGITAYII. Topologically, residues 28 to 790 are periplasmic; sequence YHYSRDLPDY…SKEDQSQEIY (763 aa). Residues 49–220 are transglycosylase; it reads TRIYSHDGKL…SELNPERNYA (172 aa). The active-site Proton donor; for transglycosylase activity is glutamate 87. Residues 398–711 are transpeptidase; it reads DVIVVEPIKD…SNVVLPIFID (314 aa). The Acyl-ester intermediate; for transpeptidase activity role is filled by serine 457.

The protein in the N-terminal section; belongs to the glycosyltransferase 51 family. In the C-terminal section; belongs to the transpeptidase family.

The protein localises to the cell inner membrane. The catalysed reaction is [GlcNAc-(1-&gt;4)-Mur2Ac(oyl-L-Ala-gamma-D-Glu-L-Lys-D-Ala-D-Ala)](n)-di-trans,octa-cis-undecaprenyl diphosphate + beta-D-GlcNAc-(1-&gt;4)-Mur2Ac(oyl-L-Ala-gamma-D-Glu-L-Lys-D-Ala-D-Ala)-di-trans,octa-cis-undecaprenyl diphosphate = [GlcNAc-(1-&gt;4)-Mur2Ac(oyl-L-Ala-gamma-D-Glu-L-Lys-D-Ala-D-Ala)](n+1)-di-trans,octa-cis-undecaprenyl diphosphate + di-trans,octa-cis-undecaprenyl diphosphate + H(+). It carries out the reaction Preferential cleavage: (Ac)2-L-Lys-D-Ala-|-D-Ala. Also transpeptidation of peptidyl-alanyl moieties that are N-acyl substituents of D-alanine.. It participates in cell wall biogenesis; peptidoglycan biosynthesis. Functionally, cell wall formation. Synthesis of cross-linked peptidoglycan from the lipid intermediates. The enzyme has a penicillin-insensitive transglycosylase N-terminal domain (formation of linear glycan strands) and a penicillin-sensitive transpeptidase C-terminal domain (cross-linking of the peptide subunits). The sequence is that of Penicillin-binding protein 1A (mrcA) from Rickettsia felis (strain ATCC VR-1525 / URRWXCal2) (Rickettsia azadi).